A 207-amino-acid polypeptide reads, in one-letter code: Imidazole glycerol phosphate synthase subunit HisH (207 aa).

The region spanning 1–207 (MIGIIDYGMG…KRFGQLVEGN (207 aa)) is the Glutamine amidotransferase type-1 domain. Cysteine 79 (nucleophile) is an active-site residue. Residues histidine 185 and glutamate 187 contribute to the active site.

In terms of assembly, heterodimer of HisH and HisF.

Its subcellular location is the cytoplasm. It carries out the reaction 5-[(5-phospho-1-deoxy-D-ribulos-1-ylimino)methylamino]-1-(5-phospho-beta-D-ribosyl)imidazole-4-carboxamide + L-glutamine = D-erythro-1-(imidazol-4-yl)glycerol 3-phosphate + 5-amino-1-(5-phospho-beta-D-ribosyl)imidazole-4-carboxamide + L-glutamate + H(+). It catalyses the reaction L-glutamine + H2O = L-glutamate + NH4(+). It participates in amino-acid biosynthesis; L-histidine biosynthesis; L-histidine from 5-phospho-alpha-D-ribose 1-diphosphate: step 5/9. IGPS catalyzes the conversion of PRFAR and glutamine to IGP, AICAR and glutamate. The HisH subunit catalyzes the hydrolysis of glutamine to glutamate and ammonia as part of the synthesis of IGP and AICAR. The resulting ammonia molecule is channeled to the active site of HisF. The sequence is that of Imidazole glycerol phosphate synthase subunit HisH from Shouchella clausii (strain KSM-K16) (Alkalihalobacillus clausii).